Consider the following 384-residue polypeptide: 5-amino-6-(D-ribitylamino)uracil--L-tyrosine 4-hydroxyphenyl transferase 2 (384 aa).

Positions 53-286 (VSYVVNRNIY…IAISRIILHT (234 aa)) constitute a Radical SAM core domain. Residues C67, C71, and C74 each contribute to the [4Fe-4S] cluster site.

The protein belongs to the radical SAM superfamily. CofH family. In terms of assembly, consists of two subunits, CofG and CofH. [4Fe-4S] cluster is required as a cofactor.

The enzyme catalyses 5-amino-6-(D-ribitylamino)uracil + L-tyrosine + S-adenosyl-L-methionine = 5-amino-5-(4-hydroxybenzyl)-6-(D-ribitylimino)-5,6-dihydrouracil + 2-iminoacetate + 5'-deoxyadenosine + L-methionine + H(+). It participates in cofactor biosynthesis; coenzyme F0 biosynthesis. Its function is as follows. Catalyzes the radical-mediated synthesis of 5-amino-5-(4-hydroxybenzyl)-6-(D-ribitylimino)-5,6-dihydrouracil from 5-amino-6-(D-ribitylamino)uracil and L-tyrosine. This Methanosarcina acetivorans (strain ATCC 35395 / DSM 2834 / JCM 12185 / C2A) protein is 5-amino-6-(D-ribitylamino)uracil--L-tyrosine 4-hydroxyphenyl transferase 2.